Reading from the N-terminus, the 166-residue chain is 2-C-methyl-D-erythritol 2,4-cyclodiphosphate synthase (166 aa).

Residues Asp-12 and His-14 each contribute to the a divalent metal cation site. 4-CDP-2-C-methyl-D-erythritol 2-phosphate contacts are provided by residues 12-14 (DVH) and 38-39 (HS). Residue His-46 participates in a divalent metal cation binding. Residues 60–62 (DIG), 136–139 (TTSE), Phe-143, and Arg-146 contribute to the 4-CDP-2-C-methyl-D-erythritol 2-phosphate site.

The protein belongs to the IspF family. In terms of assembly, homotrimer. It depends on a divalent metal cation as a cofactor.

The catalysed reaction is 4-CDP-2-C-methyl-D-erythritol 2-phosphate = 2-C-methyl-D-erythritol 2,4-cyclic diphosphate + CMP. It participates in isoprenoid biosynthesis; isopentenyl diphosphate biosynthesis via DXP pathway; isopentenyl diphosphate from 1-deoxy-D-xylulose 5-phosphate: step 4/6. Functionally, involved in the biosynthesis of isopentenyl diphosphate (IPP) and dimethylallyl diphosphate (DMAPP), two major building blocks of isoprenoid compounds. Catalyzes the conversion of 4-diphosphocytidyl-2-C-methyl-D-erythritol 2-phosphate (CDP-ME2P) to 2-C-methyl-D-erythritol 2,4-cyclodiphosphate (ME-CPP) with a corresponding release of cytidine 5-monophosphate (CMP). This Xanthomonas axonopodis pv. citri (strain 306) protein is 2-C-methyl-D-erythritol 2,4-cyclodiphosphate synthase.